We begin with the raw amino-acid sequence, 125 residues long: Large ribosomal subunit protein bL12 (125 aa).

A disordered region spans residues 95-125 (APKPIKEGVDKKTAEEAKKKLEEAGAKAELK).

The protein belongs to the bacterial ribosomal protein bL12 family. As to quaternary structure, homodimer. Part of the ribosomal stalk of the 50S ribosomal subunit. Forms a multimeric L10(L12)X complex, where L10 forms an elongated spine to which 2 to 4 L12 dimers bind in a sequential fashion. Binds GTP-bound translation factors.

Forms part of the ribosomal stalk which helps the ribosome interact with GTP-bound translation factors. Is thus essential for accurate translation. This is Large ribosomal subunit protein bL12 from Polynucleobacter necessarius subsp. necessarius (strain STIR1).